A 528-amino-acid polypeptide reads, in one-letter code: Linear primary-alkylsulfatase (528 aa).

Residues H42, H44, D46, H47, E151, and E170 each contribute to the Zn(2+) site. Sulfate is bound by residues 179–184 (NVHTLR) and R189. H213 contributes to the Zn(2+) binding site. Position 275 (Y275) interacts with sulfate.

This sequence belongs to the metallo-beta-lactamase superfamily. Type III sulfatase family. Requires Zn(2+) as cofactor.

The enzyme catalyses a primary linear alkyl sulfate ester + H2O = a primary alcohol + sulfate + H(+). Alkylsulfatase that cleaves the widely used detergent sodium dodecyl sulfate (SDS), which allows the bacterium to use SDS as a sole carbon or sulfur source. The sequence is that of Linear primary-alkylsulfatase from Pseudomonas sp. (strain ATCC 19151).